The sequence spans 308 residues: tRNA dimethylallyltransferase (308 aa).

Residue 19–26 (GPTASGKS) participates in ATP binding. Residue 21-26 (TASGKS) participates in substrate binding. The interaction with substrate tRNA stretch occupies residues 44–47 (DSMQ).

This sequence belongs to the IPP transferase family. Monomer. Mg(2+) is required as a cofactor.

The enzyme catalyses adenosine(37) in tRNA + dimethylallyl diphosphate = N(6)-dimethylallyladenosine(37) in tRNA + diphosphate. Functionally, catalyzes the transfer of a dimethylallyl group onto the adenine at position 37 in tRNAs that read codons beginning with uridine, leading to the formation of N6-(dimethylallyl)adenosine (i(6)A). The polypeptide is tRNA dimethylallyltransferase (Methylobacterium radiotolerans (strain ATCC 27329 / DSM 1819 / JCM 2831 / NBRC 15690 / NCIMB 10815 / 0-1)).